We begin with the raw amino-acid sequence, 277 residues long: Large ribosomal subunit protein uL2 (277 aa).

Disordered regions lie at residues 24–55 and 221–277; these read ITTS…RHHG and RGSV…RKKK.

This sequence belongs to the universal ribosomal protein uL2 family. As to quaternary structure, part of the 50S ribosomal subunit. Forms a bridge to the 30S subunit in the 70S ribosome.

In terms of biological role, one of the primary rRNA binding proteins. Required for association of the 30S and 50S subunits to form the 70S ribosome, for tRNA binding and peptide bond formation. It has been suggested to have peptidyltransferase activity; this is somewhat controversial. Makes several contacts with the 16S rRNA in the 70S ribosome. The sequence is that of Large ribosomal subunit protein uL2 from Listeria welshimeri serovar 6b (strain ATCC 35897 / DSM 20650 / CCUG 15529 / CIP 8149 / NCTC 11857 / SLCC 5334 / V8).